Reading from the N-terminus, the 107-residue chain is uncharacterized protein (107 aa).

A helical transmembrane segment spans residues Met37 to Val59.

Its subcellular location is the membrane. This is an uncharacterized protein from Saccharomyces cerevisiae (strain ATCC 204508 / S288c) (Baker's yeast).